A 119-amino-acid chain; its full sequence is Small ribosomal subunit protein bS16 (119 aa).

This sequence belongs to the bacterial ribosomal protein bS16 family.

The polypeptide is Small ribosomal subunit protein bS16 (Amoebophilus asiaticus (strain 5a2)).